Reading from the N-terminus, the 445-residue chain is tRNA-2-methylthio-N(6)-dimethylallyladenosine synthase (445 aa).

Positions 3–124 constitute an MTTase N-terminal domain; sequence KNLYIKTYGC…LPELISKIVR (122 aa). C12, C48, C87, C162, C166, and C169 together coordinate [4Fe-4S] cluster. Positions 148-380 constitute a Radical SAM core domain; it reads YPQGASSFIS…QKELMDQQLA (233 aa). The TRAM domain occupies 383 to 445; the sequence is ESCVGSTIKV…SLNSLTGEIL (63 aa).

It belongs to the methylthiotransferase family. MiaB subfamily. In terms of assembly, monomer. [4Fe-4S] cluster serves as cofactor.

The protein resides in the cytoplasm. The enzyme catalyses N(6)-dimethylallyladenosine(37) in tRNA + (sulfur carrier)-SH + AH2 + 2 S-adenosyl-L-methionine = 2-methylsulfanyl-N(6)-dimethylallyladenosine(37) in tRNA + (sulfur carrier)-H + 5'-deoxyadenosine + L-methionine + A + S-adenosyl-L-homocysteine + 2 H(+). Catalyzes the methylthiolation of N6-(dimethylallyl)adenosine (i(6)A), leading to the formation of 2-methylthio-N6-(dimethylallyl)adenosine (ms(2)i(6)A) at position 37 in tRNAs that read codons beginning with uridine. This Rickettsia akari (strain Hartford) protein is tRNA-2-methylthio-N(6)-dimethylallyladenosine synthase.